A 295-amino-acid polypeptide reads, in one-letter code: Acetylglutamate kinase (295 aa).

Residues 66-67 (GG), arginine 88, and asparagine 193 each bind substrate.

This sequence belongs to the acetylglutamate kinase family. ArgB subfamily.

The protein resides in the cytoplasm. The enzyme catalyses N-acetyl-L-glutamate + ATP = N-acetyl-L-glutamyl 5-phosphate + ADP. It participates in amino-acid biosynthesis; L-arginine biosynthesis; N(2)-acetyl-L-ornithine from L-glutamate: step 2/4. Functionally, catalyzes the ATP-dependent phosphorylation of N-acetyl-L-glutamate. In Rhizobium rhizogenes (strain K84 / ATCC BAA-868) (Agrobacterium radiobacter), this protein is Acetylglutamate kinase.